Here is a 369-residue protein sequence, read N- to C-terminus: 3,7-dimethylxanthine N-methyltransferase TCS1 (369 aa).

Y24 contacts S-adenosyl-L-homocysteine. T31 lines the caffeine pocket. Residues C66, N71, D103, L104, S138, and F139 each contribute to the S-adenosyl-L-homocysteine site. 3 residues coordinate caffeine: Y156, H159, and W160. N177 is a binding site for Mg(2+). Position 225 (R225) interacts with caffeine. Mg(2+) is bound by residues D263, F265, and N266. Residue F321 coordinates caffeine.

Belongs to the methyltransferase superfamily. Type-7 methyltransferase family. Mg(2+) serves as cofactor. Expressed in young leaves and flowers.

The catalysed reaction is 7-methylxanthine + S-adenosyl-L-methionine = theobromine + S-adenosyl-L-homocysteine + H(+). It catalyses the reaction theobromine + S-adenosyl-L-methionine = caffeine + S-adenosyl-L-homocysteine + H(+). It carries out the reaction 1,7-dimethylxanthine + S-adenosyl-L-methionine = caffeine + S-adenosyl-L-homocysteine + H(+). It participates in alkaloid biosynthesis. Involved in the biosynthesis of caffeine. Catalyzes the conversion of 7-methylxanthine (7mX) to theobromine and of theobromine to caffeine. Has 3-N- and 1-N-methylation activity. The polypeptide is 3,7-dimethylxanthine N-methyltransferase TCS1 (Camellia sinensis (Tea plant)).